A 596-amino-acid polypeptide reads, in one-letter code: MKNIRNFSIIAHIDHGKSTLADRLIQECGAVEARDMKAQLMDTMDIEKERGITIKAQSVRLSYRYEGEDYILNLIDTPGHVDFSYEVSRSLASCEGALLVVDASQGVEAQTIANVYIALDNELEILPVINKIDLPAADPLRVKQEIEQTIGLDCSGALHVSAKSGLGIKELLDEIIRRIPAPNGQESASTKALIYDSWFDNYLGALALVRVVDGSIKVGQNILVMSTGKKHEVLNLMYPHPLAPQKTQEIKTGEIGIVVLGLKNVTDIAVGDTMTDAKNPTKEAIDGFQPAKPFVFAGLYPIDTDRFEELRDALNKLKLNDSSIQYEPETSVALGFGFRVGFLGMLHMEVIKERLEREFDLDLIATAPTVIYHLTLTDGSEVSVQNPSELPPEQKIAKMEEPYVRATIIVPSEYLGNVITMVSRRRGVQEKMEYINETRVMLVYAIPTNEIVMDFYDKLKSGTKGYASFDYEPIEYREGDLAKLDIRVAGEIVDALSIIVPKEKSYERGKELVEAMKEIVPRQLFEVAIQASVGNKIIARETVKSMGKNVTAKCYGGDITRKRKLLEKQKEGKKRMKAIGRVELPQEAFLAVLKID.

One can recognise a tr-type G domain in the interval 2–183 (KNIRNFSIIA…EIIRRIPAPN (182 aa)). GTP is bound by residues 14–19 (DHGKST) and 130–133 (NKID).

It belongs to the TRAFAC class translation factor GTPase superfamily. Classic translation factor GTPase family. LepA subfamily.

The protein localises to the cell inner membrane. It carries out the reaction GTP + H2O = GDP + phosphate + H(+). Functionally, required for accurate and efficient protein synthesis under certain stress conditions. May act as a fidelity factor of the translation reaction, by catalyzing a one-codon backward translocation of tRNAs on improperly translocated ribosomes. Back-translocation proceeds from a post-translocation (POST) complex to a pre-translocation (PRE) complex, thus giving elongation factor G a second chance to translocate the tRNAs correctly. Binds to ribosomes in a GTP-dependent manner. The polypeptide is Elongation factor 4 (Wolinella succinogenes (strain ATCC 29543 / DSM 1740 / CCUG 13145 / JCM 31913 / LMG 7466 / NCTC 11488 / FDC 602W) (Vibrio succinogenes)).